Here is a 400-residue protein sequence, read N- to C-terminus: Nicotinate phosphoribosyltransferase (400 aa).

His220 is modified (phosphohistidine; by autocatalysis).

This sequence belongs to the NAPRTase family. In terms of processing, transiently phosphorylated on a His residue during the reaction cycle. Phosphorylation strongly increases the affinity for substrates and increases the rate of nicotinate D-ribonucleotide production. Dephosphorylation regenerates the low-affinity form of the enzyme, leading to product release.

It carries out the reaction nicotinate + 5-phospho-alpha-D-ribose 1-diphosphate + ATP + H2O = nicotinate beta-D-ribonucleotide + ADP + phosphate + diphosphate. It participates in cofactor biosynthesis; NAD(+) biosynthesis; nicotinate D-ribonucleotide from nicotinate: step 1/1. Catalyzes the synthesis of beta-nicotinate D-ribonucleotide from nicotinate and 5-phospho-D-ribose 1-phosphate at the expense of ATP. This Salmonella heidelberg (strain SL476) protein is Nicotinate phosphoribosyltransferase.